The chain runs to 350 residues: MFCCLGYEWLSGGCKTWHSAWVINTLADHRHRGTDFGGSPWLLIITVFLRSYKFAISLCTSYLCVSFLKTIFPSQNGHDGSTDVQQRARRSNRRRQEGIKIVLEDIFTLWRQVETKVRAKIRKMKVTTKVNRHDKINGKRKTAKEHLRKLSMKEREHGEKERQVSEAEENGKLDMKEIHTYMEMFQRAQALRRRAEDYYRCKITPSARKPLCNRVRMAAVEHRHSSGLPYWPYLTAETLKNRMGHQPPPPTQQHSIIDNSLSLKTPSECLLTPLPPSALPSADDNLKTPAECLLYPLPPSADDNLKTPPECLLTPLPPSAPPSVDDNLKTPPECVCSLPFHPQRMIISRN.

The segment at 306–325 (KTPPECLLTPLPPSAPPSVD) is disordered.

Belongs to the NPIP family. In terms of assembly, may associate with the nuclear pore complex. As to expression, widely expressed.

It localises to the nucleus. It is found in the nuclear pore complex. The protein resides in the nucleus membrane. The polypeptide is Nuclear pore complex-interacting protein family member A1 (NPIPA1) (Homo sapiens (Human)).